We begin with the raw amino-acid sequence, 555 residues long: Transcription factor kojR (555 aa).

Residues 21-47 constitute a DNA-binding region (zn(2)-C6 fungal-type); the sequence is CETCKLRKRKCDGHEPCTYCLRYEYQC. The disordered stretch occupies residues 51 to 73; that stretch reads PHPRRKPAASKSSARPSEEEDSP.

The protein localises to the nucleus. Transcription factor that regulates the gene cluster that mediates the biosynthesis of 5-hydroxy-2-hydroxymethyl-1,4-pyrone, also know as kojic acid, a by-product in the fermentation process of malting rice that acts as a chelation agent. Negatively regulates the expression of the kojic acid-related protein kap1. Improves the antioxidant capacity via the accumulation of kojic acid that is also a strong oxidant. This chain is Transcription factor kojR, found in Aspergillus oryzae (strain ATCC 42149 / RIB 40) (Yellow koji mold).